Here is a 79-residue protein sequence, read N- to C-terminus: Sec-independent protein translocase protein TatA (79 aa).

The helical transmembrane segment at 1–21 threads the bilayer; sequence MGGFTSIWHWVIVLLVIVLLF. Residues 46-79 are disordered; it reads DDEEEAKNEPKTLDAQATQTKVHETSEIKSKQES. The span at 66–79 shows a compositional bias: basic and acidic residues; sequence KVHETSEIKSKQES.

Belongs to the TatA/E family. In terms of assembly, the Tat system comprises two distinct complexes: a TatABC complex, containing multiple copies of TatA, TatB and TatC subunits, and a separate TatA complex, containing only TatA subunits. Substrates initially bind to the TatABC complex, which probably triggers association of the separate TatA complex to form the active translocon.

Its subcellular location is the cell inner membrane. Its function is as follows. Part of the twin-arginine translocation (Tat) system that transports large folded proteins containing a characteristic twin-arginine motif in their signal peptide across membranes. TatA could form the protein-conducting channel of the Tat system. In Helicobacter pylori (strain HPAG1), this protein is Sec-independent protein translocase protein TatA.